The following is a 348-amino-acid chain: uncharacterized protein (348 aa).

This is an uncharacterized protein from Geobacillus kaustophilus (strain HTA426).